The sequence spans 485 residues: 3-isopropylmalate dehydratase large subunit (485 aa).

Residues C367, C427, and C430 each coordinate [4Fe-4S] cluster. A compositionally biased stretch (polar residues) spans 439 to 451; it reads SPGQRAASTSNRN. Residues 439–462 form a disordered region; it reads SPGQRAASTSNRNFEGRQGKGGRT.

The protein belongs to the aconitase/IPM isomerase family. LeuC type 1 subfamily. Heterodimer of LeuC and LeuD. The cofactor is [4Fe-4S] cluster.

It catalyses the reaction (2R,3S)-3-isopropylmalate = (2S)-2-isopropylmalate. Its pathway is amino-acid biosynthesis; L-leucine biosynthesis; L-leucine from 3-methyl-2-oxobutanoate: step 2/4. Its function is as follows. Catalyzes the isomerization between 2-isopropylmalate and 3-isopropylmalate, via the formation of 2-isopropylmaleate. The sequence is that of 3-isopropylmalate dehydratase large subunit from Actinoplanes teichomyceticus.